The chain runs to 239 residues: Ribosomal RNA small subunit methyltransferase G (239 aa).

S-adenosyl-L-methionine-binding positions include Gly-79, Phe-84, 130–131 (AE), and Arg-149.

It belongs to the methyltransferase superfamily. RNA methyltransferase RsmG family.

It is found in the cytoplasm. Functionally, specifically methylates the N7 position of a guanine in 16S rRNA. This Lactobacillus delbrueckii subsp. bulgaricus (strain ATCC BAA-365 / Lb-18) protein is Ribosomal RNA small subunit methyltransferase G.